Consider the following 122-residue polypeptide: Large ribosomal subunit protein uL18 (122 aa).

Residues 1–24 form a disordered region; that stretch reads MSTLSRKQQTQKRHRRLRRHLSGT. The span at 9–21 shows a compositional bias: basic residues; that stretch reads QTQKRHRRLRRHL.

The protein belongs to the universal ribosomal protein uL18 family. Part of the 50S ribosomal subunit; part of the 5S rRNA/L5/L18/L25 subcomplex. Contacts the 5S and 23S rRNAs.

In terms of biological role, this is one of the proteins that bind and probably mediate the attachment of the 5S RNA into the large ribosomal subunit, where it forms part of the central protuberance. In Synechococcus sp. (strain WH7803), this protein is Large ribosomal subunit protein uL18.